Reading from the N-terminus, the 415-residue chain is Enolase (415 aa).

Glutamine 161 lines the (2R)-2-phosphoglycerate pocket. The active-site Proton donor is the glutamate 203. Aspartate 240, glutamate 281, and aspartate 308 together coordinate Mg(2+). The (2R)-2-phosphoglycerate site is built by lysine 333, arginine 362, serine 363, and lysine 384. Catalysis depends on lysine 333, which acts as the Proton acceptor.

The protein belongs to the enolase family. It depends on Mg(2+) as a cofactor.

It is found in the cytoplasm. The protein localises to the secreted. It localises to the cell surface. The enzyme catalyses (2R)-2-phosphoglycerate = phosphoenolpyruvate + H2O. It participates in carbohydrate degradation; glycolysis; pyruvate from D-glyceraldehyde 3-phosphate: step 4/5. Functionally, catalyzes the reversible conversion of 2-phosphoglycerate (2-PG) into phosphoenolpyruvate (PEP). It is essential for the degradation of carbohydrates via glycolysis. The sequence is that of Enolase from Campylobacter hominis (strain ATCC BAA-381 / DSM 21671 / CCUG 45161 / LMG 19568 / NCTC 13146 / CH001A).